The chain runs to 283 residues: Trafficking protein particle complex subunit 31 (283 aa).

Residues 1–16 (MSQRIIQPSASDQQFP) show a composition bias toward polar residues. Disordered regions lie at residues 1-20 (MSQR…GKSD) and 126-156 (SSKL…RLQE). The span at 126 to 151 (SSKLSNASNSPGMLANSSTATSASAN) shows a compositional bias: low complexity.

Belongs to the TRAPP small subunits family. BET3 subfamily. As to quaternary structure, part of the multisubunit TRAPP (transport protein particle) I complex composed of BET3, BET5, TRS20, TRS23, TRS31 and TRS33. Part of the multisubunit TRAPP (transport protein particle) II complex composed of BET3, BET5, TRS20, TRS23, TRS31, TRS33, TRS65, TRS85, TRS120 and TRS130. Part of the multisubunit TRAPP (transport protein particle) III complex composed of BET3, BET5, TRS20, TRS23, TRS31, TRS33 and TRS85.

It localises to the golgi apparatus. The protein resides in the cis-Golgi network. The protein localises to the endoplasmic reticulum. It is found in the preautophagosomal structure. Component of the TRAPP I, TRAPP II and TRAPP III complexes which act as guanine nucleotide exchange factors (GEF) for YPT1. TRAPP I plays a key role in the late stages of endoplasmic reticulum to Golgi traffic. TRAPP II plays a role in intra-Golgi transport. TRAPP III plays a role in autophagosome formation. This chain is Trafficking protein particle complex subunit 31 (TRS31), found in Saccharomyces cerevisiae (strain ATCC 204508 / S288c) (Baker's yeast).